Here is a 434-residue protein sequence, read N- to C-terminus: Cobyrinate a,c-diamide synthase (434 aa).

In terms of domain architecture, GATase cobBQ-type spans lysine 239–leucine 430. Cysteine 320 functions as the Nucleophile in the catalytic mechanism.

This sequence belongs to the CobB/CbiA family. Requires Mg(2+) as cofactor.

It carries out the reaction cob(II)yrinate + 2 L-glutamine + 2 ATP + 2 H2O = cob(II)yrinate a,c diamide + 2 L-glutamate + 2 ADP + 2 phosphate + 2 H(+). It functions in the pathway cofactor biosynthesis; adenosylcobalamin biosynthesis; cob(II)yrinate a,c-diamide from sirohydrochlorin (anaerobic route): step 10/10. Its function is as follows. Catalyzes the ATP-dependent amidation of the two carboxylate groups at positions a and c of cobyrinate, using either L-glutamine or ammonia as the nitrogen source. The polypeptide is Cobyrinate a,c-diamide synthase (Saccharolobus solfataricus (strain ATCC 35092 / DSM 1617 / JCM 11322 / P2) (Sulfolobus solfataricus)).